The chain runs to 412 residues: Tryptophan synthase beta chain 1 (412 aa).

Lysine 103 carries the post-translational modification N6-(pyridoxal phosphate)lysine.

This sequence belongs to the TrpB family. In terms of assembly, tetramer of two alpha and two beta chains. Pyridoxal 5'-phosphate serves as cofactor.

It carries out the reaction (1S,2R)-1-C-(indol-3-yl)glycerol 3-phosphate + L-serine = D-glyceraldehyde 3-phosphate + L-tryptophan + H2O. The protein operates within amino-acid biosynthesis; L-tryptophan biosynthesis; L-tryptophan from chorismate: step 5/5. Its function is as follows. The beta subunit is responsible for the synthesis of L-tryptophan from indole and L-serine. The chain is Tryptophan synthase beta chain 1 (trpB1) from Chlamydia caviae (strain ATCC VR-813 / DSM 19441 / 03DC25 / GPIC) (Chlamydophila caviae).